We begin with the raw amino-acid sequence, 637 residues long: Early transcription factor 70 kDa subunit (637 aa).

Residues 32–185 (RTIIDENRSV…GHIIDLMSEE (154 aa)) form the Helicase ATP-binding domain. Residue 45–52 (HIMGSGKT) participates in ATP binding. Residues 135–138 (DEAH) carry the DEXH box motif. The Helicase C-terminal domain occupies 327-507 (KFKYFINRIQ…VLPFDIKKLL (181 aa)).

Belongs to the helicase family. VETF subfamily. Heterodimer of a 70 kDa and a 82 kDa subunit. Part of the early transcription complex composed of ETF, RAP94/OPG109, and the DNA-directed RNA polymerase.

The protein resides in the virion. Functionally, acts with RNA polymerase to initiate transcription from early gene promoters. Is recruited by the RPO-associated protein of 94 kDa RAP94/OPG109 to form the early transcription complex, which also contains the core RNA polymerase. ETF heterodimer binds to early gene promoters. The sequence is that of Early transcription factor 70 kDa subunit (OPG118) from Vaccinia virus (strain Ankara) (VACV).